The following is a 240-amino-acid chain: Ribonuclease 3 (240 aa).

The 131-residue stretch at 13–143 (DHASLLEALG…LLGAVHLQHG (131 aa)) folds into the RNase III domain. Glu-53 contacts Mg(2+). Asp-57 is an active-site residue. 2 residues coordinate Mg(2+): Asp-129 and Glu-132. Glu-132 is a catalytic residue. Residues 170-238 (DWKTSLQELT…AGAAYQALTA (69 aa)) enclose the DRBM domain.

It belongs to the ribonuclease III family. In terms of assembly, homodimer. Mg(2+) is required as a cofactor.

The protein localises to the cytoplasm. The enzyme catalyses Endonucleolytic cleavage to 5'-phosphomonoester.. Digests double-stranded RNA. Involved in the processing of primary rRNA transcript to yield the immediate precursors to the large and small rRNAs (23S and 16S). Processes some mRNAs, and tRNAs when they are encoded in the rRNA operon. Processes pre-crRNA and tracrRNA of type II CRISPR loci if present in the organism. The polypeptide is Ribonuclease 3 (Nocardia farcinica (strain IFM 10152)).